Reading from the N-terminus, the 391-residue chain is Lysophosphatidylinositol acyltransferase 10 (391 aa).

5 helical membrane passes run 10-30, 52-72, 97-119, 323-343, and 347-367; these read LLGW…NYII, AISY…GVRI, WMYM…KISL, LTSL…IFFV, and QLGF…YGGI.

It belongs to the 1-acyl-sn-glycerol-3-phosphate acyltransferase family. In terms of tissue distribution, expressed in seam cells, vulval epithelial cells and the major epithelial syncytium hyp7, and in several head neurons including AIY interneurons.

It is found in the endoplasmic reticulum membrane. The enzyme catalyses a 2-acyl-sn-glycero-3-phospho-D-myo-inositol + an acyl-CoA = a 1,2-diacyl-sn-glycero-3-phospho-(1D-myo-inositol) + CoA. The catalysed reaction is a 2-acyl-sn-glycero-3-phospho-D-myo-inositol + octadecanoyl-CoA = 1-octadecanoyl-2-acyl-sn-glycero-3-phospho-1D-myo-inositol + CoA. It functions in the pathway phospholipid metabolism; phosphatidylinositol metabolism. Functionally, acyltransferase required for the fatty acid remodeling of phosphatidylinositol (1,2-diacyl-sn-glycero-3-phosphoinositol or PI). Mediates the conversion of lysophosphatidylinositol (2-acylglycerophosphatidylinositol or LPI) into PI (LPIAT activity). Has preference for saturated and mono-unsaturated fatty acids as acyl donors and sn-2-acyl lysoPI (2-acyl-sn-glycero-3-phospho-D-myo-inositol) as acyl acceptor. Contributes to the asymmetric cell division of epithelial cells. Asymmetric cell division is the fundamental mechanism by which multicellular organisms generate cell diversity. This is Lysophosphatidylinositol acyltransferase 10 from Caenorhabditis elegans.